Consider the following 477-residue polypeptide: Nuclear receptor subfamily 6 group A member 1-A (477 aa).

The segment at residues Gln-40 to Glu-115 is a DNA-binding region (nuclear receptor). 2 NR C4-type zinc fingers span residues Cys-43–Cys-63 and Cys-79–Cys-98. Residues Asp-147–Arg-187 form a disordered region. Residues Trp-156–Arg-187 show a composition bias toward polar residues. In terms of domain architecture, NR LBD spans Gln-230 to Tyr-461.

This sequence belongs to the nuclear hormone receptor family. NR6 subfamily. In terms of assembly, homodimer. In terms of tissue distribution, expressed in germ cells, being predominant in previtellogenic oocytes in the ovary and in spermatocytes in the testis.

It localises to the nucleus. Probable orphan nuclear receptor. Binds to a response element containing repeats of the motif 5'-AGGTCA-3'. The chain is Nuclear receptor subfamily 6 group A member 1-A from Danio rerio (Zebrafish).